The chain runs to 350 residues: Decarboxylase iboD (350 aa).

It belongs to the phosphatidylserine decarboxylase family.

It participates in secondary metabolite biosynthesis. In terms of biological role, decarboxylase; part of the gene cluster that mediates the biosynthesis of the psychoactive metabolites ibotenic acid and muscimol. The first committed step is glutamate hydroxylation by the 2-oxoglutarate-dependent dioxygenase iboH, and the last step is decarboxylation of ibotenic acid to muscimol by the decarboxylase iboD. The order of the intermediate reactions is somewhat ambiguous. IboA likely activates the carboxylic acid at position 5 to introduce an amide bond, and the flavin monooxygenase iboF generates the N-O bond. There are several options for the latter step. One option is that iboF directly hydroxylates the amide nitrogen formed by iboA to produce a hydroxamic acid species. Another option is that iboF hydroxylates an external N-containing compound, whose resulting N-O bond is subsequently introduced into the hydroxyglutamate scaffold. The paralogous PLP-dependent cystathionine gamma-synthase-like enzymes iboG1 and iboG2 are likely involved in substitution of the OH group at position 3 by the O-N moiety. The first cyclic intermediate is most probably tricholomic acid which is likely desaturated to ibotenic acid by the cytochrome P450 monooxygenase iboC. This chain is Decarboxylase iboD, found in Amanita muscaria (strain Koide BX008).